The primary structure comprises 225 residues: NAD(P)H-quinone oxidoreductase subunit K, chloroplastic (225 aa).

Residues Cys43, Cys44, Cys108, and Cys139 each contribute to the [4Fe-4S] cluster site.

It belongs to the complex I 20 kDa subunit family. In terms of assembly, NDH is composed of at least 16 different subunits, 5 of which are encoded in the nucleus. [4Fe-4S] cluster serves as cofactor.

It is found in the plastid. The protein localises to the chloroplast thylakoid membrane. It carries out the reaction a plastoquinone + NADH + (n+1) H(+)(in) = a plastoquinol + NAD(+) + n H(+)(out). The catalysed reaction is a plastoquinone + NADPH + (n+1) H(+)(in) = a plastoquinol + NADP(+) + n H(+)(out). Functionally, NDH shuttles electrons from NAD(P)H:plastoquinone, via FMN and iron-sulfur (Fe-S) centers, to quinones in the photosynthetic chain and possibly in a chloroplast respiratory chain. The immediate electron acceptor for the enzyme in this species is believed to be plastoquinone. Couples the redox reaction to proton translocation, and thus conserves the redox energy in a proton gradient. This is NAD(P)H-quinone oxidoreductase subunit K, chloroplastic from Oryza nivara (Indian wild rice).